The following is a 754-amino-acid chain: MTILTHTLGFPRVGLRRELKKAQESYWAGNSTREALLAVGRELRARHWEQQKQAGIDLLPVGDFAWYDHVLTTSLLLGNVPARHQNNDGSMDIDTLFRIGRGRAPTGEPAAAAEMTKWFNTNYHYIVPEFSKGQQFRLTWTQLLEEVDEALALGHKIKPVLLGPVTYLWLGKVKGEPFDRLTLLKDILPVYQHVLAELAKRGIEWVQIDEPALVLELPQAWLDAFKPAYDALAGQVKLLLTTYFEGVTPNLDTIIALPVQGLHVDLIHGKDDVAELHQRLPVDWLLSAGLINGRNVWRADLTEKYAQINALVGKRALWVASSCSLLHSPIDLSVETRLDTEVKSWFAFALQKCGELALLRDALNSGETAALEEWSAPIQARRHSRRVHNAAVEKRLAAITAQDSQRENPYEVRAEAQRARFKLPAWPTTTIGSFPQTTEIRGLRLDFKKGNLDANNYRTGIAEHIKQAIIEQERLGLDVLVHGEAERNDMVEYFGEHLDGFVFTQNGWVQSYGSRCVKPPVVIGDISRPAPITVEWAKYAQSLTDKPVKGMLTGPVTILCWSFPREDVTRETIAKQIALALRDEVADLEAAGIGIIQIDEPALREGLPLRRSDWDAYLEWGVEAFRINAAVAKDETQIHTHMCYCEFNDIMDSIAALDADVITIETSRSDMELLESFEAFDYPNEIGPGVYDIHSPNVPSVEWIEALLKKAAQRIPAQRLWVNPDCGLKTRGWPETRAALANMVKAAHNLRQAK.

Residues 17 to 20 (RELK) and Lys-117 each bind 5-methyltetrahydropteroyltri-L-glutamate. L-homocysteine-binding positions include 431-433 (IGS) and Glu-484. L-methionine contacts are provided by residues 431-433 (IGS) and Glu-484. 5-methyltetrahydropteroyltri-L-glutamate-binding positions include 515–516 (RC) and Trp-561. Asp-599 lines the L-homocysteine pocket. Asp-599 contributes to the L-methionine binding site. Glu-605 provides a ligand contact to 5-methyltetrahydropteroyltri-L-glutamate. The Zn(2+) site is built by His-641, Cys-643, and Glu-665. The active-site Proton donor is the His-694. Zn(2+) is bound at residue Cys-726.

The protein belongs to the vitamin-B12 independent methionine synthase family. Zn(2+) serves as cofactor.

The catalysed reaction is 5-methyltetrahydropteroyltri-L-glutamate + L-homocysteine = tetrahydropteroyltri-L-glutamate + L-methionine. It participates in amino-acid biosynthesis; L-methionine biosynthesis via de novo pathway; L-methionine from L-homocysteine (MetE route): step 1/1. Functionally, catalyzes the transfer of a methyl group from 5-methyltetrahydrofolate to homocysteine resulting in methionine formation. This chain is 5-methyltetrahydropteroyltriglutamate--homocysteine methyltransferase, found in Salmonella choleraesuis (strain SC-B67).